Reading from the N-terminus, the 66-residue chain is MEGISITKLLVIAVLIVLLFGTNKLRTLGSDLGAALKGFKKAMNDETPAAKKSDGAEAAPRVENKE.

The chain crosses the membrane as a helical span at residues 1 to 21 (MEGISITKLLVIAVLIVLLFG). Positions 46 to 66 (ETPAAKKSDGAEAAPRVENKE) are disordered.

Belongs to the TatA/E family. TatE subfamily.

Its subcellular location is the cell inner membrane. Its function is as follows. Part of the twin-arginine translocation (Tat) system that transports large folded proteins containing a characteristic twin-arginine motif in their signal peptide across membranes. TatE shares overlapping functions with TatA. The sequence is that of Probable Sec-independent protein translocase protein TatE from Edwardsiella piscicida.